A 37-amino-acid chain; its full sequence is Large ribosomal subunit protein bL36c (37 aa).

As to quaternary structure, component of the chloroplast large ribosomal subunit (LSU). Mature 70S chloroplast ribosomes of higher plants consist of a small (30S) and a large (50S) subunit. The 30S small subunit contains 1 molecule of ribosomal RNA (16S rRNA) and 24 different proteins. The 50S large subunit contains 3 rRNA molecules (23S, 5S and 4.5S rRNA) and 33 different proteins.

It localises to the plastid. Its subcellular location is the chloroplast. Functionally, component of the chloroplast ribosome (chloro-ribosome), a dedicated translation machinery responsible for the synthesis of chloroplast genome-encoded proteins, including proteins of the transcription and translation machinery and components of the photosynthetic apparatus. In Spinacia oleracea (Spinach), this protein is Large ribosomal subunit protein bL36c (rpl36).